The following is a 127-amino-acid chain: MMRQSVQTVLPESTGNNTLSLRDSVCRDLFQLFSSPHSPLPILLVSGMPEWQGHNQSDKLLQSWYCRQLRSALLFHEPRIAALQVNLKEAYCHELAISLEMMLYHDDEPLTFDLVWQKGNWHRTMPQ.

The protein belongs to the GpW/Gp25 family. IraD subfamily. Interacts with RssB.

It is found in the cytoplasm. Inhibits RpoS proteolysis by regulating RssB activity, thereby increasing the stability of the sigma stress factor RpoS during oxidative stress. Its effect on RpoS stability is due to its interaction with RssB, which probably blocks the interaction of RssB with RpoS, and the consequent delivery of the RssB-RpoS complex to the ClpXP protein degradation pathway. This is Anti-adapter protein IraD from Escherichia coli (strain UTI89 / UPEC).